The sequence spans 607 residues: Glycerophosphodiester phosphodiesterase domain-containing protein 5 (607 aa).

Topologically, residues 1–42 (MVRHQPLQYYEPQLCLSCLTGIYGCRWKRYQRSHDDTTPWER) are cytoplasmic. Intrachain disulfides connect Cys-15-Cys-18 and Cys-25-Cys-571. A helical transmembrane segment spans residues 43–63 (LWFLLLVCTFSLTLTWLYFWW). The Extracellular segment spans residues 64 to 89 (GVHNDYDEFNWYLYNRMGYWSDWSVP). The chain crosses the membrane as a helical span at residues 90–110 (ILVTSAAAFTYIAGLLVLALC). Over 111–125 (HIAVGQQLNLHWIHK) the chain is Cytoplasmic. A helical transmembrane segment spans residues 126-146 (MGLVVILASTVVAMSAVAQLW). The Extracellular portion of the chain corresponds to 147-160 (EDEWEVLLISLQGT). The helical transmembrane segment at 161–181 (APFLHIGALVAITALSWIVAG) threads the bilayer. The Cytoplasmic segment spans residues 182–192 (QFARAERSSSQ). A helical membrane pass occupies residues 193-213 (LTILCTFFAVVFTFYLIPLTI). The Extracellular portion of the chain corresponds to 214–496 (SSPCIMEKKD…PLWIMPPDEY (283 aa)). The GP-PDE domain occupies 228–485 (PALIGHRGAP…DNSHTLSRVP (258 aa)). 5 N-linked (GlcNAc...) asparagine glycosylation sites follow: Asn-301, Asn-336, Asn-352, Asn-374, and Asn-448. Residues 497-517 (CLMWVTADLISFSLIIGIFVL) form a helical membrane-spanning segment. At 518–607 (QKWRLGGIRS…AKTVTEQSGH (90 aa)) the chain is on the cytoplasmic side. The interval 582-607 (ANSTATPVGPRNAGSRAKTVTEQSGH) is disordered.

It belongs to the glycerophosphoryl diester phosphodiesterase family. Interacts with PRDX1; forms a mixed-disulfide with PRDX1, leading to disrupt intramolecular disulfide bond between Cys-25 and Cys-571. In terms of processing, intramolecular disulfide bond between Cys-25 and Cys-571 is reduced by PRDX1. In terms of tissue distribution, detected in brain, lung, heart, kidney and testis.

The protein localises to the endomembrane system. Its subcellular location is the cytoplasm. It is found in the perinuclear region. The protein resides in the cell projection. It localises to the growth cone. The enzyme catalyses a 1,2-diacyl-sn-glycero-3-phospho-(1D-myo-inositol-4,5-bisphosphate) + H2O = 1D-myo-inositol 1,4,5-trisphosphate + a 1,2-diacyl-sn-glycerol + H(+). It catalyses the reaction sn-glycerol 3-phosphocholine + H2O = sn-glycerol 3-phosphate + choline + H(+). Inhibited by high level of NaCl or urea. Functionally, glycerophosphodiester phosphodiesterase that promotes neurite formation and drives spinal motor neuron differentiation. Mediates the cleavage of glycosylphosphatidylinositol (GPI) anchor of target proteins: removes the GPI-anchor of RECK, leading to release RECK from the plasma membrane. May contribute to the osmotic regulation of cellular glycerophosphocholine. This chain is Glycerophosphodiester phosphodiesterase domain-containing protein 5, found in Mus musculus (Mouse).